The sequence spans 252 residues: 2-succinyl-6-hydroxy-2,4-cyclohexadiene-1-carboxylate synthase (252 aa).

This sequence belongs to the AB hydrolase superfamily. MenH family. In terms of assembly, monomer.

The catalysed reaction is 5-enolpyruvoyl-6-hydroxy-2-succinyl-cyclohex-3-ene-1-carboxylate = (1R,6R)-6-hydroxy-2-succinyl-cyclohexa-2,4-diene-1-carboxylate + pyruvate. It functions in the pathway quinol/quinone metabolism; 1,4-dihydroxy-2-naphthoate biosynthesis; 1,4-dihydroxy-2-naphthoate from chorismate: step 3/7. It participates in quinol/quinone metabolism; menaquinone biosynthesis. Its function is as follows. Catalyzes a proton abstraction reaction that results in 2,5-elimination of pyruvate from 2-succinyl-5-enolpyruvyl-6-hydroxy-3-cyclohexene-1-carboxylate (SEPHCHC) and the formation of 2-succinyl-6-hydroxy-2,4-cyclohexadiene-1-carboxylate (SHCHC). This is 2-succinyl-6-hydroxy-2,4-cyclohexadiene-1-carboxylate synthase from Salmonella paratyphi A (strain ATCC 9150 / SARB42).